We begin with the raw amino-acid sequence, 109 residues long: uncharacterized protein (109 aa).

Positions 1–22 (MKPYSTLFLFTLLTLTTVPAQA) are cleaved as a signal peptide. The tract at residues 39 to 109 (AYNPDHGRDY…ERRMEDEYGQ (71 aa)) is disordered. Basic and acidic residues predominate over residues 41–109 (NPDHGRDYED…ERRMEDEYGQ (69 aa)).

This is an uncharacterized protein from Shigella dysenteriae serotype 1 (strain Sd197).